We begin with the raw amino-acid sequence, 291 residues long: Kidney mitochondrial carrier protein 1 (291 aa).

S2 carries the post-translational modification N-acetylserine. 3 Solcar repeats span residues K7–L96, E104–H189, and D198–L289. Helical transmembrane passes span F9–I26, G71–T89, L106–A124, G164–Y183, F204–V224, and G264–Y283.

The protein belongs to the mitochondrial carrier (TC 2.A.29) family. As to quaternary structure, interacts with VDAC1.

It localises to the mitochondrion inner membrane. It catalyses the reaction sulfite(in) + sulfate(out) = sulfite(out) + sulfate(in). The enzyme catalyses thiosulfate(in) + sulfate(out) = thiosulfate(out) + sulfate(in). It carries out the reaction sulfate(out) + phosphate(in) = sulfate(in) + phosphate(out). The catalysed reaction is oxalate(in) + sulfate(out) = oxalate(out) + sulfate(in). It catalyses the reaction malonate(in) + sulfate(out) = malonate(out) + sulfate(in). The enzyme catalyses maleate(in) + sulfate(out) = maleate(out) + sulfate(in). It carries out the reaction (S)-malate(in) + sulfate(out) = (S)-malate(out) + sulfate(in). The catalysed reaction is (3S)-citramalate(in) + sulfate(out) = (3S)-citramalate(out) + sulfate(in). It catalyses the reaction (3R)-citramalate(in) + sulfate(out) = (3R)-citramalate(out) + sulfate(in). The enzyme catalyses sulfate(out) + succinate(in) = sulfate(in) + succinate(out). It carries out the reaction (S,S)-tartrate(in) + sulfate(out) = (S,S)-tartrate(out) + sulfate(in). The catalysed reaction is (2R,3R)-tartrate(in) + sulfate(out) = (2R,3R)-tartrate(out) + sulfate(in). It catalyses the reaction D-aspartate(in) + sulfate(out) = D-aspartate(out) + sulfate(in). The enzyme catalyses L-aspartate(in) + sulfate(out) = L-aspartate(out) + sulfate(in). It carries out the reaction sulfate(in) = sulfate(out). The catalysed reaction is phosphate(in) = phosphate(out). It catalyses the reaction (S)-malate(out) = (S)-malate(in). Its function is as follows. Antiporter that transports inorganic anions (sulfate, sulfite, thiosulfate and phosphate) and, to a lesser extent, a variety of dicarboxylates (e.g. malonate, malate and citramalate) and, even more so, aspartate. The sulfate/sulfate exchange is much higher than the phosphate/phosphate and malate/malate exchanges. The transport affinities is higher for sulfate and thiosulfate than for any other substrate. May catalyze the export of sulfite and thiosulfate (the hydrogen sulfide degradation products) from the mitochondria, thereby modulating the level of the hydrogen sulfide. Also may mediate a very low unidirectional transport of sulfate, phosphate and (S)-malate. The sequence is that of Kidney mitochondrial carrier protein 1 from Rattus norvegicus (Rat).